The chain runs to 299 residues: Protease HtpX homolog (299 aa).

The next 2 membrane-spanning stretches (helical) occupy residues 15–35 (ILLL…GYLF) and 39–59 (GLGG…SMIF). H143 lines the Zn(2+) pocket. E144 is an active-site residue. Residue H147 participates in Zn(2+) binding. Transmembrane regions (helical) follow at residues 158–178 (IAVA…RMMW) and 198–218 (IIML…ATLV). E227 lines the Zn(2+) pocket.

Belongs to the peptidase M48B family. Zn(2+) is required as a cofactor.

The protein localises to the cell membrane. The protein is Protease HtpX homolog of Streptococcus pneumoniae (strain Taiwan19F-14).